A 144-amino-acid polypeptide reads, in one-letter code: Signal recognition particle 19 kDa protein (144 aa).

Residues 117–144 (TRTQKTGGGDQSLQQGEGSKKGKGKKKK) are disordered.

It belongs to the SRP19 family. Component of a signal recognition particle complex that consists of a 7SL RNA molecule of 300 nucleotides and six protein subunits: SRP72, SRP68, SRP54, SRP19, SRP14 and SRP9. Interacts with IPO5, IPO7, IPO8, KPNB1 and TNPO1. Interactions with IPO8 and TNPO1 may be involved in SRP19 import into the nucleus.

The protein resides in the cytoplasm. Its subcellular location is the nucleus. It localises to the nucleolus. The protein localises to the nucleoplasm. Component of the signal recognition particle (SRP) complex, a ribonucleoprotein complex that mediates the cotranslational targeting of secretory and membrane proteins to the endoplasmic reticulum (ER). Binds directly to 7SL RNA. Mediates binding of SRP54 to the SRP complex. This chain is Signal recognition particle 19 kDa protein, found in Canis lupus familiaris (Dog).